The primary structure comprises 261 residues: 1-(5-phosphoribosyl)-5-[(5-phosphoribosylamino)methylideneamino] imidazole-4-carboxamide isomerase (261 aa).

Residue D8 is the Proton acceptor of the active site. The Proton donor role is filled by D139.

The protein belongs to the HisA/HisF family.

It is found in the cytoplasm. It catalyses the reaction 1-(5-phospho-beta-D-ribosyl)-5-[(5-phospho-beta-D-ribosylamino)methylideneamino]imidazole-4-carboxamide = 5-[(5-phospho-1-deoxy-D-ribulos-1-ylimino)methylamino]-1-(5-phospho-beta-D-ribosyl)imidazole-4-carboxamide. The protein operates within amino-acid biosynthesis; L-histidine biosynthesis; L-histidine from 5-phospho-alpha-D-ribose 1-diphosphate: step 4/9. This is 1-(5-phosphoribosyl)-5-[(5-phosphoribosylamino)methylideneamino] imidazole-4-carboxamide isomerase from Janthinobacterium sp. (strain Marseille) (Minibacterium massiliensis).